We begin with the raw amino-acid sequence, 301 residues long: MKIAVLSRNPRLYSTRRLVEAGTQRGHEVVVIDTLRAYMNIASHKPQIHYRGKPLEGFDAVIPRIGASVTFYGCAVLRQFEMMGVYPLNESVAIARSRDKLRSLQLLSRRGIGLPITGFAHSPDDIPDLIQMVNGAPLVIKVLEGTQGIGVVLCETTKAAESVIEAFMGLKQNIMVQEYIKEAGGADIRCFVVGDKVIASMKRQAKPGEFRSNLHRGGVASLIKITPEERMTAIRAAKVMGLSVAGVDILRSNHGPLVMEVNSSPGLEGIEVTTGKDVAGMIIEHLEKNSGPNQTRTKGKG.

One can recognise an ATP-grasp domain in the interval 104–287 (LQLLSRRGIG…VAGMIIEHLE (184 aa)). ATP-binding positions include Lys-141, 178–179 (EY), Asp-187, and 211–213 (RSN). The Mg(2+) site is built by Asp-248, Glu-260, and Asn-262. Mn(2+) is bound by residues Asp-248, Glu-260, and Asn-262.

The protein belongs to the RimK family. The cofactor is Mg(2+). It depends on Mn(2+) as a cofactor.

The chain is Probable alpha-L-glutamate ligase from Pseudomonas entomophila (strain L48).